A 175-amino-acid polypeptide reads, in one-letter code: Phytochrome-interacting ankyrin-repeat protein 1 (175 aa).

ANK repeat units follow at residues 30 to 59, 67 to 96, and 102 to 131; these read RGWT…DVNA, KGMT…NMEA, and CGWT…FLPD.

As to quaternary structure, interacts with phytochrome A (PHYA), both in Pr and Pfr forms.

It localises to the cytoplasm. It is found in the nucleus. Its subcellular location is the mitochondrion. The protein is Phytochrome-interacting ankyrin-repeat protein 1 of Arabidopsis thaliana (Mouse-ear cress).